Here is a 170-residue protein sequence, read N- to C-terminus: Thialysine N-epsilon-acetyltransferase (170 aa).

Residues 4 to 166 (TRIREARESD…FRFEGEAMRE (163 aa)) form the N-acetyltransferase domain. 27–28 (FE) contributes to the substrate binding site. Lys29 carries the N6-acetyllysine modification. Position 92 (Glu92) interacts with substrate. Acetyl-CoA contacts are provided by residues 94-96 (IYV), 102-107 (GQGIGT), 133-135 (NKK), and Tyr140. Catalysis depends on Tyr140, which acts as the Proton donor. Glu152 provides a ligand contact to substrate.

Belongs to the acetyltransferase family. As to quaternary structure, homodimer.

The protein localises to the cytoplasm. The catalysed reaction is S-(2-aminoethyl)-L-cysteine + acetyl-CoA = S-(2-acetamidoethyl)-L-cysteine + CoA + H(+). The enzyme catalyses an alkane-alpha,omega-diamine + acetyl-CoA = an N-acetylalkane-alpha,omega-diamine + CoA + H(+). Its function is as follows. Catalyzes the N-acetylation of the amino acid thialysine (S-(2-aminoethyl)-L-cysteine), a L-lysine analog with the 4-methylene group substituted with a sulfur. May also catalyze acetylation of polyamines, such as norspermidine, spermidine or spermine. However, ability to acetylate polyamines is weak, suggesting that it does not act as a diamine acetyltransferase in vivo. This chain is Thialysine N-epsilon-acetyltransferase, found in Mus musculus (Mouse).